Here is an 80-residue protein sequence, read N- to C-terminus: Conotoxin MaIr193 (80 aa).

The first 22 residues, 1–22, serve as a signal peptide directing secretion; that stretch reads MKLTCMMIVAVLFLTAWTLVTA. Positions 23–51 are excised as a propeptide; sequence DGTRDGLKNRFPKARLEMKNSEAPRSRGR. Intrachain disulfides connect C52–C69, C59–C73, and C68–C77. 4-hydroxyproline is present on P64.

This sequence belongs to the conotoxin O1 superfamily. As to expression, expressed by the venom duct.

The protein resides in the secreted. This is Conotoxin MaIr193 from Conus marmoreus (Marble cone).